Reading from the N-terminus, the 266-residue chain is Gasdermin bGSDM (266 aa).

A lipid anchor (S-palmitoyl cysteine) is attached at C6. 4 beta stranded membrane-spanning segments follow: residues 70–86 (ISHS…AGNF), 99–117 (APKL…FSFS), 163–180 (AIDM…DVQA), and 189–205 (LGGK…TISF). The C-terminal region stretch occupies residues 245-266 (GAAEPYLLRRGQVLIVEDMQAT).

This sequence belongs to the bacterial gasdermin family. In terms of assembly, monomer. Forms large, homooligomeric ring-shaped pores when inserted in membranes. Post-translationally, cleavage by the adjacently encoded protease (probably ISF6_0256) predicted to occur between Glu-244 and Gly-245 relieves autoinhibition, releasing the N-terminus which initiates loss of cell integrity. Palmitoylation helps stabilize the inactive state; may self palmitoylate. Palmitoylation plays a significant role in pore formation.

It is found in the cytoplasm. Its subcellular location is the cell inner membrane. The full-length protein before cleavage is inactive: intramolecular interactions between the N-terminal domain and the C-terminal region as well as the lipid modification, mediate autoinhibition. The pyroptosis-like-inducing activity is carried by the released N-terminal domain (Gasdermin bGSDM, N-terminus). Precursor of a pore-forming protein involved in defense against bacteriophages. Cleavage of this precursor by its dedicated, neighboring protease (probably ISF6_0256) releases the active moiety (gasdermin bGSDM, N-terminus) which inserts into membranes, forming pores and triggering cell death. In terms of biological role, pore-forming protein that causes membrane permeabilization via a pyroptosis-like activity. Makes ring-like pores with an interior pore diameter of 300-400 Angstroms, when integrated in liposomes. The sequence is that of Gasdermin bGSDM from Piscinibacter sakaiensis (Ideonella sakaiensis).